A 608-amino-acid chain; its full sequence is ATP-citrate synthase beta chain protein 1 (608 aa).

ATP-binding positions include 214-234 (ILRF…ELGG) and 265-291 (FKSE…KNQA). E231 contributes to the Mg(2+) binding site. H273 acts as the Tele-phosphohistidine intermediate in catalysis. Residue 292-302 (LKDAGAVVPTS) participates in CoA binding.

Belongs to the succinate/malate CoA ligase alpha subunit family. In terms of assembly, heterooctamer of 4 alpha and 4 beta chains.

The protein resides in the cytoplasm. Its subcellular location is the cytosol. The catalysed reaction is oxaloacetate + acetyl-CoA + ADP + phosphate = citrate + ATP + CoA. Functionally, ATP citrate-lyase is the primary enzyme responsible for the synthesis of cytosolic acetyl-CoA, used for the elongation of fatty acids and biosynthesis of isoprenoids, flavonoids and malonated derivatives. May supply substrate to the cytosolic acetyl-CoA carboxylase, which generates the malonyl-CoA used for the synthesis of a multitude of compounds, including very long chain fatty acids and flavonoids. In contrast to all known animal ACL enzymes having a homomeric structure, plant ACLs are composed of alpha and beta chains. This chain is ATP-citrate synthase beta chain protein 1 (ACLB-1), found in Oryza sativa subsp. japonica (Rice).